A 594-amino-acid chain; its full sequence is Aspartate--tRNA(Asp/Asn) ligase (594 aa).

E173 is a binding site for L-aspartate. Positions 197-200 are aspartate; it reads QLFK. R219 is a binding site for L-aspartate. ATP-binding positions include 219–221 and Q228; that span reads RDE. H449 contributes to the L-aspartate binding site. Residue E482 coordinates ATP. L-aspartate is bound at residue R489. 534–537 provides a ligand contact to ATP; the sequence is GLDR.

It belongs to the class-II aminoacyl-tRNA synthetase family. Type 1 subfamily. In terms of assembly, homodimer.

Its subcellular location is the cytoplasm. It carries out the reaction tRNA(Asx) + L-aspartate + ATP = L-aspartyl-tRNA(Asx) + AMP + diphosphate. In terms of biological role, aspartyl-tRNA synthetase with relaxed tRNA specificity since it is able to aspartylate not only its cognate tRNA(Asp) but also tRNA(Asn). Reaction proceeds in two steps: L-aspartate is first activated by ATP to form Asp-AMP and then transferred to the acceptor end of tRNA(Asp/Asn). This Saccharophagus degradans (strain 2-40 / ATCC 43961 / DSM 17024) protein is Aspartate--tRNA(Asp/Asn) ligase.